A 61-amino-acid polypeptide reads, in one-letter code: Potassium channel toxin alpha-KTx 5.3 (61 aa).

The signal sequence occupies residues 1–28 (MHNYYKIVLIMVAFFAVIITFSNIQVEG). 3 disulfide bridges follow: cysteine 31–cysteine 49, cysteine 36–cysteine 54, and cysteine 40–cysteine 56. Positions 34–37 (KRCQ) are [R/K]XCQ motif. A Histidine amide modification is found at histidine 59.

The protein belongs to the short scorpion toxin superfamily. Potassium channel inhibitor family. Alpha-KTx 05 subfamily. In terms of tissue distribution, expressed by the venom gland.

It is found in the secreted. Functionally, blocks small conductance calcium-activated potassium channels (KCNN, SK). Has also been shown to weakly inhibit Kv11.1/KCNH2/ERG1, Kv1.2/KCNA2, Kv1.3/KCNA3 and Kv2.1/KCNB1 voltage-gated potassium channels. The protein is Potassium channel toxin alpha-KTx 5.3 of Olivierus martensii (Manchurian scorpion).